Here is a 298-residue protein sequence, read N- to C-terminus: ADP-ribosylation factor GTPase-activating protein effector protein 2 (298 aa).

Serine 2 is modified (N-acetylserine). An Arf-GAP domain is found at 8–130 (KKALSALLRD…KWIGDLSSIE (123 aa)). The segment at 23–47 (CADCKAQLHPRWASWSLGVFICIKC) adopts a C4-type zinc-finger fold. The disordered stretch occupies residues 137 to 180 (EPVLHKPSANHSLPASNARLDQSSNSLQKTQTQPPSHLLSTSRS). Residues 145 to 171 (ANHSLPASNARLDQSSNSLQKTQTQPP) are compositionally biased toward polar residues. Residues serine 180, serine 183, and serine 207 each carry the phosphoserine modification.

It is found in the cytoplasm. The protein localises to the golgi apparatus. Its function is as follows. GTPase-activating protein for the ADP ribosylation factor family. The polypeptide is ADP-ribosylation factor GTPase-activating protein effector protein 2 (AGE2) (Saccharomyces cerevisiae (strain ATCC 204508 / S288c) (Baker's yeast)).